Reading from the N-terminus, the 396-residue chain is Tryptophan synthase beta chain (396 aa).

Position 86 is an N6-(pyridoxal phosphate)lysine (lysine 86).

The protein belongs to the TrpB family. As to quaternary structure, tetramer of two alpha and two beta chains. It depends on pyridoxal 5'-phosphate as a cofactor.

It catalyses the reaction (1S,2R)-1-C-(indol-3-yl)glycerol 3-phosphate + L-serine = D-glyceraldehyde 3-phosphate + L-tryptophan + H2O. It functions in the pathway amino-acid biosynthesis; L-tryptophan biosynthesis; L-tryptophan from chorismate: step 5/5. Its function is as follows. The beta subunit is responsible for the synthesis of L-tryptophan from indole and L-serine. The protein is Tryptophan synthase beta chain of Aliivibrio fischeri (strain MJ11) (Vibrio fischeri).